Reading from the N-terminus, the 131-residue chain is Small ribosomal subunit protein uS8 (131 aa).

The protein belongs to the universal ribosomal protein uS8 family. In terms of assembly, part of the 30S ribosomal subunit. Contacts proteins S5 and S12.

Functionally, one of the primary rRNA binding proteins, it binds directly to 16S rRNA central domain where it helps coordinate assembly of the platform of the 30S subunit. This chain is Small ribosomal subunit protein uS8, found in Legionella pneumophila (strain Paris).